A 372-amino-acid chain; its full sequence is Protein RecA (372 aa).

Position 77 to 84 (77 to 84 (GPESSGKT)) interacts with ATP.

It belongs to the RecA family.

Its subcellular location is the cytoplasm. Its function is as follows. Can catalyze the hydrolysis of ATP in the presence of single-stranded DNA, the ATP-dependent uptake of single-stranded DNA by duplex DNA, and the ATP-dependent hybridization of homologous single-stranded DNAs. It interacts with LexA causing its activation and leading to its autocatalytic cleavage. This chain is Protein RecA, found in Corynebacterium diphtheriae (strain ATCC 700971 / NCTC 13129 / Biotype gravis).